Reading from the N-terminus, the 503-residue chain is Dentin matrix acidic phosphoprotein 1 (503 aa).

The signal sequence occupies residues 1 to 16 (MKTVILLVFLWGLSCA). Over residues 23–35 (HNTESESSEERTG) the composition is skewed to basic and acidic residues. The interval 23–503 (HNTESESSEE…QDDNDCQDGY (481 aa)) is disordered. Polar residues predominate over residues 54–63 (QASPEGQANS). The segment covering 98–119 (KEDDEDDSGDDTFGDEDNDLGP) has biased composition (acidic residues). Positions 138–150 (DTTQSSEDSTSQE) are enriched in low complexity. A compositionally biased stretch (basic and acidic residues) spans 158–175 (SDSKDHDSEDEADSRPEA). Over residues 203–215 (SEFDDEGMQSDDP) the composition is skewed to acidic residues. 3 stretches are compositionally biased toward basic and acidic residues: residues 233–243 (RSEESKGDHEP), 267–286 (HVSEEDYRGELTDSNSRETQ), and 293–303 (TASKEESRSES). The segment covering 332–348 (EPSQESSSESQEGVTSE) has biased composition (low complexity). The short motif at 350–352 (RGD) is the Cell attachment site element. An N-linked (GlcNAc...) asparagine glycan is attached at Asn-356. Positions 362 to 373 (DQEDSESSEEDS) are enriched in acidic residues. Asn-394 carries N-linked (GlcNAc...) asparagine glycosylation. Over residues 407–418 (AQDGDSSSQEGL) the composition is skewed to polar residues. Residues 419–435 (QSQSASTESRSQESQSE) are compositionally biased toward low complexity. The N-linked (GlcNAc...) asparagine glycan is linked to Asn-457. A compositionally biased stretch (basic and acidic residues) spans 467 to 492 (EDIRPKNMEADSRKLIVDAYHNKPIG). Acidic residues predominate over residues 493 to 503 (DQDDNDCQDGY).

In terms of assembly, interacts with importin alpha. Phosphorylated in the cytosol and extracellular matrix and unphosphorylated in the nucleus. Phosphorylation is necessary for nucleocytoplasmic transport and may be catalyzed by a nuclear isoform of CK2 and can be augmented by calcium. Phosphorylated (in vitro) by FAM20C in the extracellular medium at sites within the S-x-E/pS motif. As to expression, expressed in tooth particularly in odontoblast, ameloblast and cementoblast. Also expressed in bone particularly in osteoblast.

Its subcellular location is the nucleus. It is found in the cytoplasm. It localises to the secreted. The protein resides in the extracellular space. The protein localises to the extracellular matrix. Its function is as follows. May have a dual function during osteoblast differentiation. In the nucleus of undifferentiated osteoblasts, unphosphorylated form acts as a transcriptional component for activation of osteoblast-specific genes like osteocalcin. During the osteoblast to osteocyte transition phase it is phosphorylated and exported into the extracellular matrix, where it regulates nucleation of hydroxyapatite. The chain is Dentin matrix acidic phosphoprotein 1 from Mus musculus (Mouse).